A 501-amino-acid polypeptide reads, in one-letter code: MTSPDSPDDIPEQFRIRQAKRERLLAEGREPYPVKVDRTHTLAELRQAYPDLEPDTKTGLKVGVAGRVIFARNSGKLCFATLQEGDGAQLQVMISFAEVGQESLDAWKADVDLGDIVFVHGEVISSRRGELSVLADSWQIVSKALRPLPVAHKELNEETRVRQRYVDLIVRPEARTIARQRIAVVRAVRSALERRGFLEVETPMLQTLAGGAAARPFVTHSNALDADLYLRIAPELFLKRCVVGGFDRVFELNRNFRNEGADSTHSPEFAMLETYQAYGTYDDSATVTRELIQEVADEAIGTRQVPLADGTEYDLDGEWQSLQMYPSLSEALGEEITPATPAEKLWQIADRLGVEIPRDRGYGHGKLVEELWEFTVGDTLWAPTFVRDFPVETTPLTRPHRSIEGVTEKWDLYVRKFELATGYSELIDPIIQRERFEAQARAAAAGDDEAMALDEDFLAALEYGMPPTTGTGMGIDRLLMALTGLSIRETVLFPIVRRHSN.

Asp-411 and Glu-418 together coordinate Mg(2+).

This sequence belongs to the class-II aminoacyl-tRNA synthetase family. As to quaternary structure, homodimer. It depends on Mg(2+) as a cofactor.

It localises to the cytoplasm. It catalyses the reaction tRNA(Lys) + L-lysine + ATP = L-lysyl-tRNA(Lys) + AMP + diphosphate. This chain is Lysine--tRNA ligase, found in Mycolicibacterium gilvum (strain PYR-GCK) (Mycobacterium gilvum (strain PYR-GCK)).